Consider the following 423-residue polypeptide: Glycine amidinotransferase, mitochondrial (423 aa).

The N-terminal 43 residues, 1 to 43, are a transit peptide targeting the mitochondrion; that stretch reads MLRVRCLRGGSRGAEAVHYIGSRLGGSLTGWVQRTFQSTQAAT. 2 positions are modified to phosphoserine: Ser46 and Ser49. Residue Asp170 coordinates arginine. Residues Asp254 and His303 contribute to the active site. Arginine contacts are provided by Asp305, Arg322, Ser354, and Ser355. Lys385 is subject to N6-acetyllysine. The active-site Amidino-cysteine intermediate is the Cys407.

This sequence belongs to the amidinotransferase family. In terms of assembly, homodimer. In terms of tissue distribution, highly expressed in the kidney and pancreas, especially in the proximal tubules of the kidney, and alpha cells of the pancreatic islets (at protein level). Moderately expressed in liver hepatocytes (at protein level). Expressed in the kidney, pancreas, liver, colon, ileum, jejunum, heart and skeletal muscle. In reproductive tissues, expressed in the testis, epididymis, ovary, oviduct and uterus. Expressed throughout the brain in neurons, astrocytes and oligodendrocytes. In 12.5 dpc embryos, it is expressed in the middle part of the somites, hepatic primordium and wall of the dorsal aorta. Expressed in 15.5 dpc embryos in isolated cells throughout the central nervous system, skeletal muscles, gonad primordia, caudal somites, liver and pancreas, but not in the choroid plexus, root ganglia or kidney. Expressed in skeletal muscle, kidney, pancreas, central nervous system, liver and intestine epithelial cells, but not in epidermis, dermis, olfactory epithelium, trachea, lung, stomach or heart in 18.5 dpc embryos.

The protein resides in the mitochondrion inner membrane. It carries out the reaction L-arginine + glycine = guanidinoacetate + L-ornithine. The catalysed reaction is 4-aminobutanoate + L-arginine = 4-guanidinobutanoate + L-ornithine. It catalyses the reaction beta-alanine + L-arginine = 3-guanidinopropanoate + L-ornithine. The enzyme catalyses taurine + L-arginine = taurocyamine + L-ornithine. Its pathway is amine and polyamine biosynthesis; creatine biosynthesis; creatine from L-arginine and glycine: step 1/2. Transamidinase that catalyzes the transfer of the amidino group of L-arginine onto the amino moiety of acceptor metabolites such as glycine, beta-alanine, gamma-aminobutyric acid (GABA) and taurine yielding the corresponding guanidine derivatives. Catalyzes the rate-limiting step of creatine biosynthesis, namely the transfer of the amidino group from L-arginine to glycine to generate guanidinoacetate, which is then methylated by GAMT to form creatine. Provides creatine as a source for ATP generation in tissues with high energy demands, in particular skeletal muscle, heart and brain. The protein is Glycine amidinotransferase, mitochondrial (Gatm) of Rattus norvegicus (Rat).